We begin with the raw amino-acid sequence, 334 residues long: Oligopeptide transport ATP-binding protein OppF (334 aa).

In terms of domain architecture, ABC transporter spans 12–265 (LEIADLKVHF…PLHPYTKALM (254 aa)). Residue 57–64 (GESGCGKS) coordinates ATP.

The protein belongs to the ABC transporter superfamily. In terms of assembly, the complex is composed of two ATP-binding proteins (OppD and OppF), two transmembrane proteins (OppB and OppC) and a solute-binding protein (OppA).

It localises to the cell inner membrane. The enzyme catalyses a [peptide](out) + ATP + H2O = a [peptide](in) + ADP + phosphate + H(+). It carries out the reaction L-alanyl-gamma-D-glutamyl-meso-2,6-diaminopimelate(out) + ATP + H2O = L-alanyl-gamma-D-glutamyl-meso-2,6-diaminopimelate(in) + ADP + phosphate + H(+). Its function is as follows. Part of the ABC transporter complex OppABCDF involved in the uptake of oligopeptides, including the cell wall murein tripeptide L-alanyl-gamma-D-glutamyl-meso-diaminopimelate. Probably responsible for energy coupling to the transport system. Plays an important nutritional role and is involved in the recycling of cell wall peptides. The polypeptide is Oligopeptide transport ATP-binding protein OppF (Salmonella typhimurium (strain LT2 / SGSC1412 / ATCC 700720)).